A 64-amino-acid polypeptide reads, in one-letter code: Large ribosomal subunit protein bL35 (64 aa).

Belongs to the bacterial ribosomal protein bL35 family.

This is Large ribosomal subunit protein bL35 from Colwellia psychrerythraea (strain 34H / ATCC BAA-681) (Vibrio psychroerythus).